A 701-amino-acid chain; its full sequence is Probable cytosolic oligopeptidase A (701 aa).

Residue A2 is modified to N-acetylalanine. Residues 148-194 adopt a coiled-coil conformation; that stretch reads IALEDDKREEFNKIEQELEKLSHKFSENVLDATKKFEKLITDKKEIE. H483 contributes to the Zn(2+) binding site. E484 is an active-site residue. The Zn(2+) site is built by H487 and E513. 615–621 is a binding site for substrate; the sequence is HIFAGGY.

Belongs to the peptidase M3 family. It depends on Zn(2+) as a cofactor.

It localises to the cytoplasm. The protein localises to the cytosol. The catalysed reaction is Hydrolysis of oligopeptides, with broad specificity. Gly or Ala commonly occur as P1 or P1' residues, but more distant residues are also important, as is shown by the fact that Z-Gly-Pro-Gly-|-Gly-Pro-Ala is cleaved, but not Z-(Gly)(5).. Inhibited by salicylic acid. Its function is as follows. Oligopeptidase that may be involved in the degradation of proteasome-generated peptides. Binds salicylic acid. This is Probable cytosolic oligopeptidase A from Arabidopsis thaliana (Mouse-ear cress).